Here is a 496-residue protein sequence, read N- to C-terminus: Catalase-A (496 aa).

Active-site residues include H54 and N128. Heme is bound at residue Y338. The Microbody targeting signal signature appears at 494–496 (SNL).

This sequence belongs to the catalase family. It depends on heme as a cofactor.

Its subcellular location is the peroxisome matrix. It catalyses the reaction 2 H2O2 = O2 + 2 H2O. Catalyzes the degradation of hydrogen peroxide (H(2)O(2)) generated by peroxisomal oxidases to water and oxygen, thereby protecting cells from the toxic effects of hydrogen peroxide. This is Catalase-A (catA) from Dictyostelium discoideum (Social amoeba).